A 338-amino-acid chain; its full sequence is Taste receptor type 2 member 39 (338 aa).

The Extracellular segment spans residues methionine 1–serine 30. The helical transmembrane segment at proline 31 to alanine 51 threads the bilayer. The Cytoplasmic segment spans residues asparagine 52 to arginine 74. A helical transmembrane segment spans residues isoleucine 75–threonine 95. The Extracellular segment spans residues isoleucine 96–serine 116. A helical transmembrane segment spans residues phenylalanine 117–valine 137. The Cytoplasmic portion of the chain corresponds to lysine 138–glycine 156. Residues leucine 157–isoleucine 177 traverse the membrane as a helical segment. Residues asparagine 178–serine 205 lie on the Extracellular side of the membrane. An N-linked (GlcNAc...) asparagine glycan is attached at asparagine 194. The chain crosses the membrane as a helical span at residues valine 206–leucine 226. The Cytoplasmic segment spans residues alanine 227 to lysine 262. Residues alanine 263–serine 283 traverse the membrane as a helical segment. Topologically, residues asparagine 284–leucine 291 are extracellular. Residues tryptophan 292–isoleucine 312 form a helical membrane-spanning segment. Residues lysine 313–leucine 338 lie on the Cytoplasmic side of the membrane.

Belongs to the G-protein coupled receptor T2R family.

It is found in the membrane. Its function is as follows. Receptor that may play a role in the perception of bitterness and is gustducin-linked. May play a role in sensing the chemical composition of the gastrointestinal content. The activity of this receptor may stimulate alpha gustducin, mediate PLC-beta-2 activation and lead to the gating of TRPM5. In Macaca mulatta (Rhesus macaque), this protein is Taste receptor type 2 member 39 (TAS2R39).